Consider the following 1722-residue polypeptide: Lymphocyte antigen 75 (1722 aa).

The first 27 residues, 1–27, serve as a signal peptide directing secretion; it reads MGTRRVTPGCAAGLLVLLLRCFGLAEP. Residues 28 to 1666 lie on the Extracellular side of the membrane; that stretch reads SEFSGDDSFT…VVCKVPLSPD (1639 aa). In terms of domain architecture, Ricin B-type lectin spans 32 to 182; that stretch reads GDDSFTIVNE…FLVGETWHHD (151 aa). Asn-135 carries N-linked (GlcNAc...) asparagine glycosylation. The 48-residue stretch at 164–211 folds into the Fibronectin type-II domain; sequence SYGRPCEFPFLVGETWHHDCIRDENHSGPWCATTLNYEYDQKWGICLK. 4 disulfide bridges follow: Cys-169-Cys-194, Cys-183-Cys-209, Cys-247-Cys-340, and Cys-317-Cys-332. One can recognise a C-type lectin 1 domain in the interval 225-341; that stretch reads QIGSCYQFNN…CEAQQPYVCK (117 aa). Residues Asn-345 and Asn-377 are each glycosylated (N-linked (GlcNAc...) asparagine). C-type lectin domains are found at residues 368-486, 493-625, and 652-791; these read QNGF…YVCK, NDTR…ICKK, and SNLS…WVCQ. 2 cysteine pairs are disulfide-bonded: Cys-389–Cys-485 and Cys-462–Cys-477. N-linked (GlcNAc...) asparagine glycosylation is present at Asn-529. 3 disulfide bridges follow: Cys-597–Cys-614, Cys-678–Cys-790, and Cys-752–Cys-782. 2 N-linked (GlcNAc...) asparagine glycosylation sites follow: Asn-843 and Asn-865. The residue at position 933 (Tyr-933) is a Phosphotyrosine. N-linked (GlcNAc...) asparagine glycosylation is found at Asn-934 and Asn-1076. C-type lectin domains follow at residues 958-1091 and 1110-1222; these read FQNK…LCQK and YLNN…ICYY. Disulfide bonds link Cys-1060–Cys-1080 and Cys-1197–Cys-1211. 3 N-linked (GlcNAc...) asparagine glycosylation sites follow: Asn-1225, Asn-1320, and Asn-1392. One can recognise a C-type lectin 7 domain in the interval 1251-1374; that stretch reads FQNSCYNFMI…VIDETLHFYQ (124 aa). C-type lectin domains are found at residues 1401 to 1513 and 1542 to 1661; these read YEDG…ICYK and YGDH…VCKV. Cysteines 1488 and 1502 form a disulfide. N-linked (GlcNAc...) asparagine glycans are attached at residues Asn-1593 and Asn-1626. A disulfide bridge connects residues Cys-1635 and Cys-1650. Residues 1667–1691 form a helical membrane-spanning segment; the sequence is YRGIAVLFAVLSVLALISGLIWFLV. Topologically, residues 1692–1722 are cytoplasmic; sequence QRNHFRWTGLSSVRYEHGANEDEVMLPSFHD. Phosphoserine is present on residues Ser-1703 and Ser-1719.

Expressed in the thymus and cultured bone marrow cells.

It localises to the membrane. In terms of biological role, acts as an endocytic receptor to direct captured antigens from the extracellular space to a specialized antigen-processing compartment. Causes reduced proliferation of B lymphocytes. This Mesocricetus auratus (Golden hamster) protein is Lymphocyte antigen 75 (LY75).